A 394-amino-acid chain; its full sequence is Putative nickel insertion protein (394 aa).

It belongs to the LarC family.

This chain is Putative nickel insertion protein, found in Syntrophotalea carbinolica (strain DSM 2380 / NBRC 103641 / GraBd1) (Pelobacter carbinolicus).